Consider the following 273-residue polypeptide: 5-deoxy-glucuronate isomerase (273 aa).

The protein belongs to the isomerase IolB family.

It carries out the reaction 5-deoxy-D-glucuronate = 5-dehydro-2-deoxy-D-gluconate. It participates in polyol metabolism; myo-inositol degradation into acetyl-CoA; acetyl-CoA from myo-inositol: step 4/7. Functionally, involved in the isomerization of 5-deoxy-glucuronate (5DG) to 5-dehydro-2-deoxy-D-gluconate (DKG or 2-deoxy-5-keto-D-gluconate). This is 5-deoxy-glucuronate isomerase from Listeria monocytogenes serotype 4a (strain HCC23).